Reading from the N-terminus, the 247-residue chain is MENSPRYREATNLIPSPRCHNSNNSCGMSSSSESNKPPTTPTRHVTTRSESGNPYPTTFVQADTSSFKQVVQMLTGSAERPKHGSSLKPNPTHHQPDPRSTPSSFSIPPIKAVPNKKQSSSSASGFRLYERRNSMKNLKINPLNPVFNPVNSAFSPRKPEILSPSILDFPSLVLSPVTPLIPDPFDRSGSSNQSPNELAAEEKAMKERGFYLHPSPATTPMDPEPRLLPLFPVTSPRVSGSSSASTS.

Residues 1-128 (MENSPRYREA…SSSSASGFRL (128 aa)) are disordered. At Ser16 the chain carries Phosphoserine. Low complexity predominate over residues 21-37 (NSNNSCGMSSSSESNKP). 2 stretches are compositionally biased toward polar residues: residues 48–75 (RSES…QMLT) and 87–106 (LKPN…SSFS). Residues 67–76 (FKQVVQMLTG) carry the VQ motif. Phosphoserine is present on residues Ser106, Ser155, Ser163, Ser165, and Ser175. Position 178 is a phosphothreonine (Thr178). The disordered stretch occupies residues 184-247 (PFDRSGSSNQ…VSGSSSASTS (64 aa)). Phosphoserine is present on Ser194. The span at 200–210 (AEEKAMKERGF) shows a compositional bias: basic and acidic residues. Ser215 carries the phosphoserine modification. Thr219 and Thr234 each carry phosphothreonine. A phosphoserine mark is found at Ser235, Ser239, and Ser243. A compositionally biased stretch (polar residues) spans 236 to 247 (PRVSGSSSASTS).

Interacts with MPK3 and MPK6. In terms of processing, phosphorylated on serine and threonine residues by MPK6 following treatment with the pathogen-associated molecular pattern (PAMP) flg22. MAP kinase-mediated phosphorylation after PAMP elicitation causes degradation of VQ4, allowing WRKY33 to promote transcription from defense genes.

It is found in the nucleus. Its function is as follows. Acts as a negative regulator of WRKY33 transcription factor activity in the promotion of defense gene expression. Acts as a negative regulator of pathogen-associated molecular pattern (PAMP)-induced responses to modulate resistance to pathogens. The sequence is that of VQ motif-containing protein 4 from Arabidopsis thaliana (Mouse-ear cress).